The following is a 367-amino-acid chain: Succinyl-diaminopimelate desuccinylase (367 aa).

Histidine 67 contacts Zn(2+). Aspartate 69 is an active-site residue. Aspartate 98 contacts Zn(2+). Glutamate 128 functions as the Proton acceptor in the catalytic mechanism. Zn(2+)-binding residues include glutamate 129, glutamate 157, and histidine 342.

Belongs to the peptidase M20A family. DapE subfamily. In terms of assembly, homodimer. Zn(2+) serves as cofactor. It depends on Co(2+) as a cofactor.

The catalysed reaction is N-succinyl-(2S,6S)-2,6-diaminopimelate + H2O = (2S,6S)-2,6-diaminopimelate + succinate. It functions in the pathway amino-acid biosynthesis; L-lysine biosynthesis via DAP pathway; LL-2,6-diaminopimelate from (S)-tetrahydrodipicolinate (succinylase route): step 3/3. In terms of biological role, catalyzes the hydrolysis of N-succinyl-L,L-diaminopimelic acid (SDAP), forming succinate and LL-2,6-diaminopimelate (DAP), an intermediate involved in the bacterial biosynthesis of lysine and meso-diaminopimelic acid, an essential component of bacterial cell walls. The sequence is that of Succinyl-diaminopimelate desuccinylase from Campylobacter hominis (strain ATCC BAA-381 / DSM 21671 / CCUG 45161 / LMG 19568 / NCTC 13146 / CH001A).